Here is a 413-residue protein sequence, read N- to C-terminus: ATP phosphoribosyltransferase regulatory subunit (413 aa).

A disordered region spans residues 1–21 (MRSRAARKFSTTPGTRDVLPP).

It belongs to the class-II aminoacyl-tRNA synthetase family. HisZ subfamily. In terms of assembly, heteromultimer composed of HisG and HisZ subunits.

The protein localises to the cytoplasm. Its pathway is amino-acid biosynthesis; L-histidine biosynthesis; L-histidine from 5-phospho-alpha-D-ribose 1-diphosphate: step 1/9. In terms of biological role, required for the first step of histidine biosynthesis. May allow the feedback regulation of ATP phosphoribosyltransferase activity by histidine. In Rubrobacter xylanophilus (strain DSM 9941 / JCM 11954 / NBRC 16129 / PRD-1), this protein is ATP phosphoribosyltransferase regulatory subunit.